Here is a 373-residue protein sequence, read N- to C-terminus: tRNA N6-adenosine threonylcarbamoyltransferase (373 aa).

Residues His-133, His-137, and Tyr-154 each coordinate a divalent metal cation. Residues 154-158 (YVSGG), Asp-186, Gly-201, Glu-205, and Asn-302 each bind substrate. Residue Asp-331 coordinates a divalent metal cation.

This sequence belongs to the KAE1 / TsaD family. In terms of assembly, component of the EKC/KEOPS complex composed of at least BUD32, CGI121, GON7, KAE1 and PCC1; the whole complex dimerizes. A divalent metal cation serves as cofactor.

Its subcellular location is the cytoplasm. The protein resides in the nucleus. The enzyme catalyses L-threonylcarbamoyladenylate + adenosine(37) in tRNA = N(6)-L-threonylcarbamoyladenosine(37) in tRNA + AMP + H(+). Its function is as follows. Component of the EKC/KEOPS complex that is required for the formation of a threonylcarbamoyl group on adenosine at position 37 (t(6)A37) in tRNAs that read codons beginning with adenine. The complex is probably involved in the transfer of the threonylcarbamoyl moiety of threonylcarbamoyl-AMP (TC-AMP) to the N6 group of A37. KAE1 likely plays a direct catalytic role in this reaction, but requires other protein(s) of the complex to fulfill this activity. The EKC/KEOPS complex also promotes both telomere uncapping and telomere elongation. The complex is required for efficient recruitment of transcriptional coactivators. This is tRNA N6-adenosine threonylcarbamoyltransferase from Debaryomyces hansenii (strain ATCC 36239 / CBS 767 / BCRC 21394 / JCM 1990 / NBRC 0083 / IGC 2968) (Yeast).